The chain runs to 176 residues: ATP-dependent protease subunit HslV (176 aa).

Residue threonine 2 is part of the active site. Residues glycine 157, cysteine 160, and threonine 163 each contribute to the Na(+) site.

The protein belongs to the peptidase T1B family. HslV subfamily. In terms of assembly, a double ring-shaped homohexamer of HslV is capped on each side by a ring-shaped HslU homohexamer. The assembly of the HslU/HslV complex is dependent on binding of ATP.

The protein localises to the cytoplasm. It catalyses the reaction ATP-dependent cleavage of peptide bonds with broad specificity.. Allosterically activated by HslU binding. Protease subunit of a proteasome-like degradation complex believed to be a general protein degrading machinery. The sequence is that of ATP-dependent protease subunit HslV from Pectobacterium atrosepticum (strain SCRI 1043 / ATCC BAA-672) (Erwinia carotovora subsp. atroseptica).